A 358-amino-acid polypeptide reads, in one-letter code: Ion-translocating oxidoreductase complex subunit D (358 aa).

The next 3 membrane-spanning stretches (helical) occupy residues 24-44 (ILAM…GVVL), 79-99 (LTAL…IIII), and 125-145 (IGYV…MPPI). FMN phosphoryl threonine is present on T186. 5 helical membrane passes run 220-240 (FAQG…FLIL), 248-268 (IPVA…FTGF), 271-291 (LSAI…FIAT), 297-317 (SITP…VYLI), and 321-341 (GNYP…VPLI).

The protein belongs to the NqrB/RnfD family. In terms of assembly, the complex is composed of six subunits: RnfA, RnfB, RnfC, RnfD, RnfE and RnfG. FMN serves as cofactor.

Its subcellular location is the cell inner membrane. Functionally, part of a membrane-bound complex that couples electron transfer with translocation of ions across the membrane. The polypeptide is Ion-translocating oxidoreductase complex subunit D (Haemophilus influenzae (strain ATCC 51907 / DSM 11121 / KW20 / Rd)).